Reading from the N-terminus, the 104-residue chain is Met repressor (104 aa).

Belongs to the MetJ family. In terms of assembly, homodimer.

Its subcellular location is the cytoplasm. This regulatory protein, when combined with SAM (S-adenosylmethionine) represses the expression of the methionine regulon and of enzymes involved in SAM synthesis. This chain is Met repressor, found in Shewanella oneidensis (strain ATCC 700550 / JCM 31522 / CIP 106686 / LMG 19005 / NCIMB 14063 / MR-1).